The chain runs to 196 residues: MPIGVPKVPFRSPGEEDASWVDIYNRLYRERLLFLGQEVDSEISNQLIGLMIYLSIEDDTKDLYLFINSPGGWVIPGVALYDTMQFVQPDVHTICMGSAASMGSFILVGGEITKRLAFPHARVMIHQPAGSFSEVATGEFILEVGELLKLRETLTRVYVQRTGKPLWVVSEDMERDVFMSATEAQAYGIVDLVAVE.

S101 functions as the Nucleophile in the catalytic mechanism. Residue H126 is part of the active site.

It belongs to the peptidase S14 family. Component of the chloroplastic Clp protease core complex.

The protein resides in the plastid. The protein localises to the chloroplast stroma. It catalyses the reaction Hydrolysis of proteins to small peptides in the presence of ATP and magnesium. alpha-casein is the usual test substrate. In the absence of ATP, only oligopeptides shorter than five residues are hydrolyzed (such as succinyl-Leu-Tyr-|-NHMec, and Leu-Tyr-Leu-|-Tyr-Trp, in which cleavage of the -Tyr-|-Leu- and -Tyr-|-Trp bonds also occurs).. Functionally, cleaves peptides in various proteins in a process that requires ATP hydrolysis. Has a chymotrypsin-like activity. Plays a major role in the degradation of misfolded proteins. In Lactuca sativa (Garden lettuce), this protein is ATP-dependent Clp protease proteolytic subunit.